The primary structure comprises 85 residues: MKVLLVTGVLGLLLLIKWKSQSTSTSNQTCQCPTSPWVIYAFYNSLSLVLLLCHLIPEIKPIHTSYNTHDSSKQQHISINTGNGK.

Residues 1–2 are Lumenal-facing; that stretch reads MK. The chain crosses the membrane as a helical span at residues 3–23; it reads VLLVTGVLGLLLLIKWKSQST. The Cytoplasmic segment spans residues 24 to 36; the sequence is STSNQTCQCPTSP. Residues 37 to 56 traverse the membrane as a helical segment; sequence WVIYAFYNSLSLVLLLCHLI. The Lumenal segment spans residues 57 to 85; it reads PEIKPIHTSYNTHDSSKQQHISINTGNGK.

It belongs to the carmovirus double gene block protein 2 family.

It localises to the host endoplasmic reticulum membrane. Its function is as follows. Cell-to-cell movement function. The chain is Double gene block protein 2 from Turnip crinkle virus (TCV).